Consider the following 484-residue polypeptide: Glutamate--tRNA ligase (484 aa).

Residues 11–21 (PSPTGYPHLGN) carry the 'HIGH' region motif. Zn(2+) is bound by residues Cys-108, Cys-110, Cys-135, and Asp-137. The short motif at 245-249 (KLSKR) is the 'KMSKS' region element. Lys-248 is a binding site for ATP.

It belongs to the class-I aminoacyl-tRNA synthetase family. Glutamate--tRNA ligase type 1 subfamily. In terms of assembly, monomer. Requires Zn(2+) as cofactor.

Its subcellular location is the cytoplasm. The catalysed reaction is tRNA(Glu) + L-glutamate + ATP = L-glutamyl-tRNA(Glu) + AMP + diphosphate. In terms of biological role, catalyzes the attachment of glutamate to tRNA(Glu) in a two-step reaction: glutamate is first activated by ATP to form Glu-AMP and then transferred to the acceptor end of tRNA(Glu). This Dehalococcoides mccartyi (strain ATCC BAA-2266 / KCTC 15142 / 195) (Dehalococcoides ethenogenes (strain 195)) protein is Glutamate--tRNA ligase.